The primary structure comprises 198 residues: Probable thymidylate kinase (198 aa).

Residue 9–16 participates in ATP binding; the sequence is GIDGSGKT.

It belongs to the thymidylate kinase family.

The catalysed reaction is dTMP + ATP = dTDP + ADP. This Methanococcus vannielii (strain ATCC 35089 / DSM 1224 / JCM 13029 / OCM 148 / SB) protein is Probable thymidylate kinase.